A 360-amino-acid polypeptide reads, in one-letter code: Aminomethyltransferase (360 aa).

This sequence belongs to the GcvT family. In terms of assembly, the glycine cleavage system is composed of four proteins: P, T, L and H.

The enzyme catalyses N(6)-[(R)-S(8)-aminomethyldihydrolipoyl]-L-lysyl-[protein] + (6S)-5,6,7,8-tetrahydrofolate = N(6)-[(R)-dihydrolipoyl]-L-lysyl-[protein] + (6R)-5,10-methylene-5,6,7,8-tetrahydrofolate + NH4(+). Its function is as follows. The glycine cleavage system catalyzes the degradation of glycine. The polypeptide is Aminomethyltransferase (Pseudomonas aeruginosa (strain ATCC 15692 / DSM 22644 / CIP 104116 / JCM 14847 / LMG 12228 / 1C / PRS 101 / PAO1)).